We begin with the raw amino-acid sequence, 157 residues long: Urease accessory protein UreE (157 aa).

The protein belongs to the UreE family.

Its subcellular location is the cytoplasm. In terms of biological role, involved in urease metallocenter assembly. Binds nickel. Probably functions as a nickel donor during metallocenter assembly. In Corynebacterium glutamicum (strain ATCC 13032 / DSM 20300 / JCM 1318 / BCRC 11384 / CCUG 27702 / LMG 3730 / NBRC 12168 / NCIMB 10025 / NRRL B-2784 / 534), this protein is Urease accessory protein UreE.